Consider the following 429-residue polypeptide: Threonine synthase (429 aa).

K108 bears the N6-(pyridoxal phosphate)lysine mark.

Belongs to the threonine synthase family. Pyridoxal 5'-phosphate serves as cofactor.

The enzyme catalyses O-phospho-L-homoserine + H2O = L-threonine + phosphate. It participates in amino-acid biosynthesis; L-threonine biosynthesis; L-threonine from L-aspartate: step 5/5. Functionally, catalyzes the gamma-elimination of phosphate from L-phosphohomoserine and the beta-addition of water to produce L-threonine. In Buchnera aphidicola subsp. Acyrthosiphon pisum (strain APS) (Acyrthosiphon pisum symbiotic bacterium), this protein is Threonine synthase (thrC).